The following is a 322-amino-acid chain: Phosphatidylserine decarboxylase proenzyme (322 aa).

Catalysis depends on charge relay system; for autoendoproteolytic cleavage activity residues Asp90, His147, and Ser254. Ser254 serves as the catalytic Schiff-base intermediate with substrate; via pyruvic acid; for decarboxylase activity. Residue Ser254 is modified to Pyruvic acid (Ser); by autocatalysis. The disordered stretch occupies residues 293–322 (PDAEPAPLPAEEIEAEHDASPLVDDKKDQV). Residues 308-322 (EHDASPLVDDKKDQV) show a composition bias toward basic and acidic residues.

The protein belongs to the phosphatidylserine decarboxylase family. PSD-B subfamily. Prokaryotic type I sub-subfamily. Heterodimer of a large membrane-associated beta subunit and a small pyruvoyl-containing alpha subunit. The cofactor is pyruvate. Is synthesized initially as an inactive proenzyme. Formation of the active enzyme involves a self-maturation process in which the active site pyruvoyl group is generated from an internal serine residue via an autocatalytic post-translational modification. Two non-identical subunits are generated from the proenzyme in this reaction, and the pyruvate is formed at the N-terminus of the alpha chain, which is derived from the carboxyl end of the proenzyme. The autoendoproteolytic cleavage occurs by a canonical serine protease mechanism, in which the side chain hydroxyl group of the serine supplies its oxygen atom to form the C-terminus of the beta chain, while the remainder of the serine residue undergoes an oxidative deamination to produce ammonia and the pyruvoyl prosthetic group on the alpha chain. During this reaction, the Ser that is part of the protease active site of the proenzyme becomes the pyruvoyl prosthetic group, which constitutes an essential element of the active site of the mature decarboxylase.

The protein localises to the cell membrane. It carries out the reaction a 1,2-diacyl-sn-glycero-3-phospho-L-serine + H(+) = a 1,2-diacyl-sn-glycero-3-phosphoethanolamine + CO2. Its pathway is phospholipid metabolism; phosphatidylethanolamine biosynthesis; phosphatidylethanolamine from CDP-diacylglycerol: step 2/2. In terms of biological role, catalyzes the formation of phosphatidylethanolamine (PtdEtn) from phosphatidylserine (PtdSer). The sequence is that of Phosphatidylserine decarboxylase proenzyme from Escherichia coli O9:H4 (strain HS).